An 836-amino-acid polypeptide reads, in one-letter code: Subtilisin-like protease PIMMS2 (836 aa).

Residues D155, H222, and S414 each act as charge relay system in the active site. Residues E802–R836 are disordered.

This sequence belongs to the peptidase S8 family.

The protein resides in the cell membrane. It carries out the reaction Hydrolysis of proteins with broad specificity for peptide bonds, and a preference for a large uncharged residue in P1. Hydrolyzes peptide amides.. Probable serine protease which plays a role in ookinete traversal of the mosquito host midgut epithelium. The polypeptide is Subtilisin-like protease PIMMS2 (Plasmodium berghei (strain Anka)).